Here is a 1779-residue protein sequence, read N- to C-terminus: 5-methyl-1-naphthoate synthase (1779 aa).

One can recognise a Ketosynthase family 3 (KS3) domain in the interval 10–433; that stretch reads VEPLAVIGMS…GSIAHAVLQQ (424 aa). Active-site for beta-ketoacyl synthase activity residues include cysteine 181, histidine 316, and histidine 356. An N-terminal hotdog fold region spans residues 902-1027; that stretch reads HTLIGARTTV…ATVVHEPEVG (126 aa). The PKS/mFAS DH domain maps to 902 to 1180; that stretch reads HTLIGARTTV…YVKVQDIGSG (279 aa). Residues 1042–1180 are C-terminal hotdog fold; that stretch reads PVSWTWAKVD…YVKVQDIGSG (139 aa). Positions 1664–1742 constitute a Carrier domain; sequence GELPELVLKV…ALAEFLAAEV (79 aa). Serine 1702 carries the post-translational modification O-(pantetheine 4'-phosphoryl)serine. A disordered region spans residues 1746–1771; that stretch reads TADAEETDPVAGLPAPQQGSGTAEQL.

The catalysed reaction is 5 malonyl-CoA + acetyl-CoA + 3 NADPH + 7 H(+) = 5-methyl-1-naphthoate + 5 CO2 + 3 NADP(+) + 6 CoA + 4 H2O. The protein operates within antibiotic biosynthesis. Functionally, polyketide synthase that catalyzes the biosynthesis of the bicyclic aromatic compound 5-methyl-1-naphthoate in the biosynthesis of the antitumor antibiotic azinomycin B. In Streptomyces sahachiroi, this protein is 5-methyl-1-naphthoate synthase.